The primary structure comprises 689 residues: Solute carrier family 22 member 23 (689 aa).

Disordered regions lie at residues Met1 to Ala55 and Thr162 to Asn188. Residue Asn24 is glycosylated (N-linked (GlcNAc...) asparagine). A compositionally biased stretch (polar residues) spans Trp165–Thr177. 2 helical membrane passes run Phe229–Val249 and Pro253–Val273. Asn274 carries an N-linked (GlcNAc...) asparagine glycan. 8 helical membrane passes run Phe283–Leu303, Phe310–Leu330, Val339–Pro359, Ala462–Val482, Gly489–Leu509, Ile541–Phe561, Cys572–Ile592, and Phe601–Leu621.

Belongs to the major facilitator (TC 2.A.1) superfamily. Organic cation transporter (TC 2.A.1.19) family. As to expression, expressed in many tissues, including brain, spinal cord, kidney, liver, eye, adipose tissue, lung, epididymis, adrenal gland, pineal gland, skeletal muscle, heart, spleen, thymus, ovary, uterus, testis and epididymis.

The protein localises to the membrane. This Rattus norvegicus (Rat) protein is Solute carrier family 22 member 23 (Slc22a23).